An 804-amino-acid polypeptide reads, in one-letter code: Leucine--tRNA ligase (804 aa).

The short motif at 39–50 is the 'HIGH' region element; the sequence is PFPSGKGLHVGH. A 'KMSKS' region motif is present at residues 573 to 577; sequence KMSKS. Lysine 576 lines the ATP pocket.

Belongs to the class-I aminoacyl-tRNA synthetase family.

The protein resides in the cytoplasm. The enzyme catalyses tRNA(Leu) + L-leucine + ATP = L-leucyl-tRNA(Leu) + AMP + diphosphate. The chain is Leucine--tRNA ligase from Lactobacillus johnsonii (strain CNCM I-12250 / La1 / NCC 533).